Here is a 163-residue protein sequence, read N- to C-terminus: Inner membrane protein YcdZ (163 aa).

Over 1-2 (MN) the chain is Cytoplasmic. The chain crosses the membrane as a helical span at residues 3 to 23 (ILLSIAITTGILSGIWGWVAV). A topological domain (periplasmic) is located at residue Ser-24. The helical transmembrane segment at 25–45 (LGLLSWAGFLGCTAYFACPQG) threads the bilayer. Over 46–48 (GLK) the chain is Cytoplasmic. A helical transmembrane segment spans residues 49 to 69 (GLAISAATLLSGVVWAMVIIY). Over 70-71 (GS) the chain is Periplasmic. Residues 72-92 (ALAPHLEILGYVITGIVAFLM) traverse the membrane as a helical segment. Topologically, residues 93–98 (CIQAKQ) are cytoplasmic. Residues 99-119 (LLLSFVPGTFIGACATFAGQG) traverse the membrane as a helical segment. The Periplasmic portion of the chain corresponds to 120 to 122 (DWK). The helical transmembrane segment at 123–143 (LVLPSLALGLIFGYAMKNSGL) threads the bilayer. Topologically, residues 144–163 (WLAARSAKTAHREQEIKNKA) are cytoplasmic.

The protein to E.coli YahC.

It localises to the cell inner membrane. The sequence is that of Inner membrane protein YcdZ (ycdZ) from Escherichia coli (strain K12).